The sequence spans 548 residues: Putative F-box protein At1g33020 (548 aa).

In terms of domain architecture, F-box spans 4-53; it reads AENLDSIPTDLILEIFSRMSTKSIGRCRCVSKLWKSMLGHPYFTELFLTR. The disordered stretch occupies residues 380–404; the sequence is KPISPPKQKPKPPSTETSSREDHQG. The span at 382 to 392 shows a compositional bias: pro residues; sequence ISPPKQKPKPP.

This is Putative F-box protein At1g33020 from Arabidopsis thaliana (Mouse-ear cress).